The primary structure comprises 197 residues: dITP/XTP pyrophosphatase (197 aa).

Residue S10–K15 participates in substrate binding. Residues E41 and D70 each coordinate Mg(2+). D70 serves as the catalytic Proton acceptor. Residues S71, F154–D157, K177, and H182–R183 contribute to the substrate site.

This sequence belongs to the HAM1 NTPase family. In terms of assembly, homodimer. Mg(2+) is required as a cofactor.

It carries out the reaction XTP + H2O = XMP + diphosphate + H(+). The enzyme catalyses dITP + H2O = dIMP + diphosphate + H(+). The catalysed reaction is ITP + H2O = IMP + diphosphate + H(+). Pyrophosphatase that catalyzes the hydrolysis of nucleoside triphosphates to their monophosphate derivatives, with a high preference for the non-canonical purine nucleotides XTP (xanthosine triphosphate), dITP (deoxyinosine triphosphate) and ITP. Seems to function as a house-cleaning enzyme that removes non-canonical purine nucleotides from the nucleotide pool, thus preventing their incorporation into DNA/RNA and avoiding chromosomal lesions. The sequence is that of dITP/XTP pyrophosphatase from Pseudomonas syringae pv. tomato (strain ATCC BAA-871 / DC3000).